A 509-amino-acid polypeptide reads, in one-letter code: Movement protein (509 aa).

Its subcellular location is the host cell junction. It localises to the host plasmodesma. The protein localises to the host cytoplasm. Transports viral genome to neighboring plant cells directly through plasmosdesmata, without any budding. The movement protein allows efficient cell to cell propagation, by bypassing the host cell wall barrier. This chain is Movement protein, found in Rice dwarf virus (isolate Fujian) (RDV).